We begin with the raw amino-acid sequence, 498 residues long: Na(+)/H(+) exchange regulatory cofactor NHE-RF4 (498 aa).

PDZ domains are found at residues 49 to 130 (FCLL…LAQH), 157 to 235 (LCHV…AGLE), 263 to 346 (CLNI…VDPE), and 394 to 475 (QCFL…GARN). Ser329 is subject to Phosphoserine.

As to quaternary structure, interacts with the C-terminal region of GUCY2C. Interacts with C-terminal region of SLC9A3 and the interactions decrease in response to elevated calcium ion levels. Interacts with the C-terminal region of SLC34A1. Interacts with USP2 isoform 2. Interacts (via the third PDZ domain) with SLC26A3 (via PDZ-binding motif). This interaction leads to decreased expression of SLC26A3 on the cell membrane resulting in its reduced exchanger activity. Post-translationally, phosphorylation at Ser-329 negatively regulates its interaction with SLC26A3. As to expression, expressed in kidney and small intestine. Not detected in heart, brain, spleen, lung, liver, skeletal muscle or testis.

It is found in the cell membrane. It localises to the cytoplasm. In terms of biological role, acts as a regulatory protein that associates with GUCY2C and negatively modulates its heat-stable enterotoxin-mediated activation. Stimulates SLC9A3 activity in the presence of elevated calcium ions. This Mus musculus (Mouse) protein is Na(+)/H(+) exchange regulatory cofactor NHE-RF4 (Nherf4).